A 464-amino-acid polypeptide reads, in one-letter code: MIVGAGYFEDSHDQSLMAGSLIHDSNQAPASSENTSIDLQKFKVHPYSTEALSNTANLAEAARAINHLQHQLEIDLEQEVPPVETANWDPAICTIPDHIINHQFSEDPQNILVEQQIQQYDSALYPNGVYTPAPDLLNLMQCTMAPAFPATTSVFGDTTLNGTNYLDLNGELTGVAAVPDSGSGLMFASDSALQLGYHGTQSHLIKDICHSLPQNYGLFPSEDERDVIIGVGSGDLFQEIDDRQFDSVLECRRGKGEFGKGKGKANFATERERREQLNVKFRTLRMLFPNPTKNDRASIVGDAIEYIDELNRTVKELKILVEQKRHGNNRRKVLKLDQEAAADGESSSMRPVRDDQDNQLHGAIRSSWVQRRSKECHVDVRIVDDEVNIKLTEKKKANSLLHAAKVLDEFQLELIHVVGGIIGDHHIFMFNTKVSEGSAVYACAVAKKLLQAVDVQHQALDIFN.

The interval 261–274 (GKGKANFATERERR) is basic motif; degenerate. The bHLH domain maps to 261-310 (GKGKANFATERERREQLNVKFRTLRMLFPNPTKNDRASIVGDAIEYIDEL). Residues 275–310 (EQLNVKFRTLRMLFPNPTKNDRASIVGDAIEYIDEL) are helix-loop-helix motif. A disordered region spans residues 338 to 357 (QEAAADGESSSMRPVRDDQD).

The protein belongs to the bHLH protein family. In terms of assembly, interacts with TDR.

The protein localises to the nucleus. Functionally, transcription factor involved in the regulation of tapetum programmed cell death (PCD) and degradation during male reproductive development. Interacts with TDR and promote tapetal PCD by regulating the expression of RTS, and the two lipid-transfer proteins C4 and C6, which function in microspore development. Acts downstream from and interacts with TDR in the regulation of tapetal PCD. Regulates directly the aspartic protease AP25 and AP37 during tapetal PCD. May not target the cysteine protease CP1. The chain is Transcription factor EAT1 from Oryza sativa subsp. japonica (Rice).